A 227-amino-acid polypeptide reads, in one-letter code: Cytochrome c oxidase subunit 2 (227 aa).

Over 1–14 (MAYPFELGFQDATS) the chain is Mitochondrial intermembrane. The chain crosses the membrane as a helical span at residues 15–45 (PIMEELLHFHDHTLMIVFLISSLVLYIISLM). The Mitochondrial matrix portion of the chain corresponds to 46 to 59 (LTTKLTHTSTMDAQ). A helical transmembrane segment spans residues 60–87 (EVETIWTILPAIILILIALPSLRVLYMM). Residues 88–227 (DEINDPSLTV…HFENWSSSML (140 aa)) lie on the Mitochondrial intermembrane side of the membrane. 6 residues coordinate Cu cation: H161, C196, E198, C200, H204, and M207. E198 is a Mg(2+) binding site.

The protein belongs to the cytochrome c oxidase subunit 2 family. In terms of assembly, component of the cytochrome c oxidase (complex IV, CIV), a multisubunit enzyme composed of 14 subunits. The complex is composed of a catalytic core of 3 subunits MT-CO1, MT-CO2 and MT-CO3, encoded in the mitochondrial DNA, and 11 supernumerary subunits COX4I, COX5A, COX5B, COX6A, COX6B, COX6C, COX7A, COX7B, COX7C, COX8 and NDUFA4, which are encoded in the nuclear genome. The complex exists as a monomer or a dimer and forms supercomplexes (SCs) in the inner mitochondrial membrane with NADH-ubiquinone oxidoreductase (complex I, CI) and ubiquinol-cytochrome c oxidoreductase (cytochrome b-c1 complex, complex III, CIII), resulting in different assemblies (supercomplex SCI(1)III(2)IV(1) and megacomplex MCI(2)III(2)IV(2)). Found in a complex with TMEM177, COA6, COX18, COX20, SCO1 and SCO2. Interacts with TMEM177 in a COX20-dependent manner. Interacts with COX20. Interacts with COX16. Cu cation serves as cofactor.

The protein localises to the mitochondrion inner membrane. It carries out the reaction 4 Fe(II)-[cytochrome c] + O2 + 8 H(+)(in) = 4 Fe(III)-[cytochrome c] + 2 H2O + 4 H(+)(out). Its function is as follows. Component of the cytochrome c oxidase, the last enzyme in the mitochondrial electron transport chain which drives oxidative phosphorylation. The respiratory chain contains 3 multisubunit complexes succinate dehydrogenase (complex II, CII), ubiquinol-cytochrome c oxidoreductase (cytochrome b-c1 complex, complex III, CIII) and cytochrome c oxidase (complex IV, CIV), that cooperate to transfer electrons derived from NADH and succinate to molecular oxygen, creating an electrochemical gradient over the inner membrane that drives transmembrane transport and the ATP synthase. Cytochrome c oxidase is the component of the respiratory chain that catalyzes the reduction of oxygen to water. Electrons originating from reduced cytochrome c in the intermembrane space (IMS) are transferred via the dinuclear copper A center (CU(A)) of subunit 2 and heme A of subunit 1 to the active site in subunit 1, a binuclear center (BNC) formed by heme A3 and copper B (CU(B)). The BNC reduces molecular oxygen to 2 water molecules using 4 electrons from cytochrome c in the IMS and 4 protons from the mitochondrial matrix. This Sciurus carolinensis (Eastern gray squirrel) protein is Cytochrome c oxidase subunit 2 (MT-CO2).